A 131-amino-acid polypeptide reads, in one-letter code: Large ribosomal subunit protein bL17 (131 aa).

The protein belongs to the bacterial ribosomal protein bL17 family. In terms of assembly, part of the 50S ribosomal subunit. Contacts protein L32.

The polypeptide is Large ribosomal subunit protein bL17 (Finegoldia magna (strain ATCC 29328 / DSM 20472 / WAL 2508) (Peptostreptococcus magnus)).